Consider the following 1079-residue polypeptide: Carbamoyl phosphate synthase large chain (1079 aa).

The interval 2-403 is carboxyphosphate synthetic domain; sequence PKSTDIKSIL…SIQKAIRGLE (402 aa). R129, R169, G175, G176, E208, L210, E215, G241, I242, H243, Q285, and E299 together coordinate ATP. The region spanning 133-328 is the ATP-grasp 1 domain; it reads EHSMKKLNLE…IAKIAAKLAI (196 aa). The Mg(2+) site is built by Q285, E299, and N301. Mn(2+) is bound by residues Q285, E299, and N301. The interval 404–553 is oligomerization domain; sequence VGASGFDSKI…YSTWEDECES (150 aa). The carbamoyl phosphate synthetic domain stretch occupies residues 554-936; sequence HPSKNNKKII…AFSKSMLGAH (383 aa). Residues 679-870 enclose the ATP-grasp 2 domain; the sequence is QKTVNKLRLQ…LAKISVRVMC (192 aa). Residues R715, Q754, L756, E761, G786, V787, H788, S789, Q829, and E841 each contribute to the ATP site. Q829, E841, and N843 together coordinate Mg(2+). Mn(2+) contacts are provided by Q829, E841, and N843. Residues 937-1079 enclose the MGS-like domain; sequence TNMKKSGRVL…KKIQLFYTKK (143 aa). The segment at 937–1079 is allosteric domain; the sequence is TNMKKSGRVL…KKIQLFYTKK (143 aa).

Belongs to the CarB family. As to quaternary structure, composed of two chains; the small (or glutamine) chain promotes the hydrolysis of glutamine to ammonia, which is used by the large (or ammonia) chain to synthesize carbamoyl phosphate. Tetramer of heterodimers (alpha,beta)4. Mg(2+) is required as a cofactor. The cofactor is Mn(2+).

It catalyses the reaction hydrogencarbonate + L-glutamine + 2 ATP + H2O = carbamoyl phosphate + L-glutamate + 2 ADP + phosphate + 2 H(+). The enzyme catalyses hydrogencarbonate + NH4(+) + 2 ATP = carbamoyl phosphate + 2 ADP + phosphate + 2 H(+). Its pathway is amino-acid biosynthesis; L-arginine biosynthesis; carbamoyl phosphate from bicarbonate: step 1/1. It participates in pyrimidine metabolism; UMP biosynthesis via de novo pathway; (S)-dihydroorotate from bicarbonate: step 1/3. Large subunit of the glutamine-dependent carbamoyl phosphate synthetase (CPSase). CPSase catalyzes the formation of carbamoyl phosphate from the ammonia moiety of glutamine, carbonate, and phosphate donated by ATP, constituting the first step of 2 biosynthetic pathways, one leading to arginine and/or urea and the other to pyrimidine nucleotides. The large subunit (synthetase) binds the substrates ammonia (free or transferred from glutamine from the small subunit), hydrogencarbonate and ATP and carries out an ATP-coupled ligase reaction, activating hydrogencarbonate by forming carboxy phosphate which reacts with ammonia to form carbamoyl phosphate. The chain is Carbamoyl phosphate synthase large chain from Buchnera aphidicola subsp. Acyrthosiphon pisum (strain APS) (Acyrthosiphon pisum symbiotic bacterium).